The primary structure comprises 488 residues: Aspartyl/glutamyl-tRNA(Asn/Gln) amidotransferase subunit B (488 aa).

The protein belongs to the GatB/GatE family. GatB subfamily. Heterotrimer of A, B and C subunits.

The enzyme catalyses L-glutamyl-tRNA(Gln) + L-glutamine + ATP + H2O = L-glutaminyl-tRNA(Gln) + L-glutamate + ADP + phosphate + H(+). The catalysed reaction is L-aspartyl-tRNA(Asn) + L-glutamine + ATP + H2O = L-asparaginyl-tRNA(Asn) + L-glutamate + ADP + phosphate + 2 H(+). In terms of biological role, allows the formation of correctly charged Asn-tRNA(Asn) or Gln-tRNA(Gln) through the transamidation of misacylated Asp-tRNA(Asn) or Glu-tRNA(Gln) in organisms which lack either or both of asparaginyl-tRNA or glutaminyl-tRNA synthetases. The reaction takes place in the presence of glutamine and ATP through an activated phospho-Asp-tRNA(Asn) or phospho-Glu-tRNA(Gln). This is Aspartyl/glutamyl-tRNA(Asn/Gln) amidotransferase subunit B from Neorickettsia sennetsu (strain ATCC VR-367 / Miyayama) (Ehrlichia sennetsu).